Reading from the N-terminus, the 637-residue chain is Chaperone protein DnaK (637 aa).

Phosphothreonine; by autocatalysis is present on Thr-198. Residues 601–615 are compositionally biased toward low complexity; the sequence is AQQKAQAEQAGADAG. Positions 601 to 637 are disordered; sequence AQQKAQAEQAGADAGEQPKQDDDVVDAEFEEVKEDKK. A compositionally biased stretch (acidic residues) spans 623–637; sequence DVVDAEFEEVKEDKK.

It belongs to the heat shock protein 70 family.

Its function is as follows. Acts as a chaperone. This Vibrio atlanticus (strain LGP32) (Vibrio splendidus (strain Mel32)) protein is Chaperone protein DnaK.